Consider the following 393-residue polypeptide: MPKKKPTPIQLNPTPDGSAVNGTSSAETNLEALQKKLEELELEEQQRNRLEAFLTQKQKVGELKDDDFEKISELGAGNGGVVFKVSHKPSGLVMARKLIHLEIKPAIRNQIIRELQVLHECNSPYIVGFYGVFYSDGEISICMEHMDGGSLDQVLKKAGRIPEQILGKVSIAVIKGLTYLREKHKIMHRDVKPSNILVNSRGEIKLCDFGVSGQLIDSMANSFVGTRSYMSPERLQGTHYSVQSDIWSMGLSLVEMAVGRYPIPPPDAKELELLFGCQVEGDAAETPPRPRTPGRPLSSYGMDSRPPMAIFELLDYIVNEPPAKLPSGVFSLEFQDFVNKCLIKNPAERADLKQLLVHAFIKRSDAEEVDFAGWLCSTIGLNQPSTPTHAASI.

The tract at residues 1 to 26 (MPKKKPTPIQLNPTPDGSAVNGTSSA) is disordered. Over residues 9–26 (IQLNPTPDGSAVNGTSSA) the composition is skewed to polar residues. The region spanning 68–361 (FEKISELGAG…LKQLLVHAFI (294 aa)) is the Protein kinase domain. Residues 74-82 (LGAGNGGVV) and lysine 97 each bind ATP. The active-site Proton acceptor is the aspartate 190. 2 positions are modified to phosphoserine; by RAF: serine 218 and serine 222. Residues 270–307 (ELELLFGCQVEGDAAETPPRPRTPGRPLSSYGMDSRPP) are RAF1-binding. Threonine 286 is subject to Phosphothreonine. A Phosphothreonine; by MAPK1 modification is found at threonine 292. At serine 298 the chain carries Phosphoserine; by PAK.

The protein belongs to the protein kinase superfamily. STE Ser/Thr protein kinase family. MAP kinase kinase subfamily. In terms of assembly, found in a complex with at least BRAF, HRAS, MAP2K1, MAPK3/ERK1 and RGS14. Forms a heterodimer with MAP2K2/MEK2. Forms heterodimers with KSR2 which further dimerize to form tetramers. Interacts with KSR1 or KSR2 and BRAF; the interaction with KSR1 or KSR2 mediates KSR1-BRAF or KSR2-BRAF dimerization. Interacts with ARBB2, LAMTOR3, MAPK1/ERK2 and RAF1. Interacts with MAPK1/ERK2. Interacts with MORG1. Interacts with PPARG. Interacts with isoform 1 of VRK2. Interacts with SGK1. Interacts with BIRC6/bruce. Interacts with KAT7; the interaction promotes KAT7 phosphorylation. Interacts with RAF1 and NEK10; the interaction is required for ERK1/2-signaling pathway activation in response to UV irradiation. Interacts with TRAF3IP3. Interacts with MOS. Post-translationally, phosphorylation at Ser-218 and Ser-222 by MAP kinase kinase kinases (BRAF or MEKK1) positively regulates the kinase activity. Also phosphorylated at Thr-292 by MAPK1/ERK2 and at Ser-298 by PAK. MAPK1/ERK2 phosphorylation of Thr-292 occurs in response to cellular adhesion and leads to inhibition of Ser-298 phosphorylation by PAK. Autophosphorylated at Ser-218 and Ser-222, autophosphosphorylation is promoted by NEK10 following UV irradiation.

It localises to the cytoplasm. The protein localises to the cytoskeleton. Its subcellular location is the microtubule organizing center. The protein resides in the centrosome. It is found in the spindle pole body. It localises to the nucleus. The protein localises to the membrane. It carries out the reaction L-seryl-[protein] + ATP = O-phospho-L-seryl-[protein] + ADP + H(+). It catalyses the reaction L-threonyl-[protein] + ATP = O-phospho-L-threonyl-[protein] + ADP + H(+). The enzyme catalyses L-tyrosyl-[protein] + ATP = O-phospho-L-tyrosyl-[protein] + ADP + H(+). Ras proteins such as HRAS mediate the activation of RAF proteins such as RAF1 or BRAF which in turn activate extracellular signal-regulated kinases (ERK) through MAPK (mitogen-activated protein kinases) and ERK kinases MAP2K1/MEK1 and MAP2K2/MEK2. Activation occurs through phosphorylation of Ser-218 and Ser-222. MAP2K1/MEK1 binds KSR1 or KSR2 releasing the inhibitory intramolecular interaction between KSR1 or KSR2 protein kinase and N-terminal domains. This allows KSR1 or KSR2 dimerization with BRAF leading to BRAF activation and phosphorylation of MAP2K1. MAP2K1/MEK1 is also the target of negative feed-back regulation by its substrate kinases, such as MAPK1/ERK2. These phosphorylate MAP2K1/MEK1 on Thr-292, thereby facilitating dephosphorylation of the activating residues Ser-218 and Ser-222. Inhibited by serine/threonine phosphatase 2A. Its function is as follows. Dual specificity protein kinase which acts as an essential component of the MAP kinase signal transduction pathway. Binding of extracellular ligands such as growth factors, cytokines and hormones to their cell-surface receptors activates RAS and this initiates RAF1 activation. RAF1 then further activates the dual-specificity protein kinases MAP2K1/MEK1 and MAP2K2/MEK2. Both MAP2K1/MEK1 and MAP2K2/MEK2 function specifically in the MAPK/ERK cascade, and catalyze the concomitant phosphorylation of a threonine and a tyrosine residue in a Thr-Glu-Tyr sequence located in the extracellular signal-regulated kinases MAPK3/ERK1 and MAPK1/ERK2, leading to their activation and further transduction of the signal within the MAPK/ERK cascade. Activates BRAF in a KSR1 or KSR2-dependent manner; by binding to KSR1 or KSR2 releases the inhibitory intramolecular interaction between KSR1 or KSR2 protein kinase and N-terminal domains which promotes KSR1 or KSR2-BRAF dimerization and BRAF activation. Depending on the cellular context, this pathway mediates diverse biological functions such as cell growth, adhesion, survival and differentiation, predominantly through the regulation of transcription, metabolism and cytoskeletal rearrangements. One target of the MAPK/ERK cascade is peroxisome proliferator-activated receptor gamma (PPARG), a nuclear receptor that promotes differentiation and apoptosis. MAP2K1/MEK1 has been shown to export PPARG from the nucleus. The MAPK/ERK cascade is also involved in the regulation of endosomal dynamics, including lysosome processing and endosome cycling through the perinuclear recycling compartment (PNRC), as well as in the fragmentation of the Golgi apparatus during mitosis. In Cricetulus griseus (Chinese hamster), this protein is Dual specificity mitogen-activated protein kinase kinase 1 (MAP2K1).